The following is a 421-amino-acid chain: Prenyltransferase asqH2 (421 aa).

Residues 1–28 (MDRNSFTAYGPATGAITESGEQENDHTK) form a disordered region. E105 contacts L-tryptophan. Residues R119, R272, K274, Y276, and Y341 each contribute to the substrate site.

The protein belongs to the tryptophan dimethylallyltransferase family.

It carries out the reaction yaequinolone E + dimethylallyl diphosphate + H2O = [(1'E)-3'-hydroxy-3',7'-dimethylocta-1',6'-dien-1'-yl]-quinolinone B + diphosphate. It functions in the pathway secondary metabolite biosynthesis. The protein operates within alkaloid biosynthesis. It participates in mycotoxin biosynthesis. Functionally, prenyltransferase; part of the gene cluster that mediates the biosynthesis of the aspoquinolone mycotoxins. Within the pathway, the prenyltransferase asqH2 performs the second alkylation with DMAPP at delta(3') double bond to yield a carbenium ion intermediate, which can be attacked by H(2)O to yield a styrenyl quinolone containing a C3'-hydroxyprenyl chain. The first step of the pathway is catalyzed by the nonribosomal peptide synthetase asqK that condenses anthranilic acid and O-methyl-L-tyrosine to produce 4'-methoxycyclopeptin. 4'-methoxycyclopeptin is then converted to 4'-methoxydehydrocyclopeptin by the ketoglutarate-dependent dioxygenase asqJ. AsqJ also converts its first product 4'-methoxydehydrocyclopeptin to 4'-methoxycyclopenin. The following conversion of 4'-methoxycyclopenin into 4'-methoxyviridicatin is catalyzed by the cyclopenase asqI. 4'-methoxyviridicatin is the precursor of quinolone natural products, and is further converted to quinolinone B. The prenyltransferase asqH1 then catalyzes the canonical Friedel-Crafts alkylation of quinolinone B with dimethylallyl cation to yield dimethylallyl quinolone, which is subjected to FAD-dependent dehydrogenation by the FAD-linked oxidoreductase asqF to yield conjugated aryl diene. The delta(3') double bond then serves as the site of the second alkylation with DMAPP catalyzed by the prenyltransferase asqH2 to yield a carbenium ion intermediate, which can be attacked by H(2)O to yield a styrenyl quinolone containing a C3'-hydroxyprenyl chain. The FAD-dependent monooxygenase asqG performs epoxidation of the terminal C7'-C8' olefin. Finally, after dehydratation of the epoxide at C3 by asqC, the quinolone epoxide rearrangement protein asqO catalyzes an enzymatic 3-exo-tet cyclization to yield the cyclopropyl-THF ring system in aspoquinolone. This chain is Prenyltransferase asqH2, found in Emericella nidulans (strain FGSC A4 / ATCC 38163 / CBS 112.46 / NRRL 194 / M139) (Aspergillus nidulans).